The primary structure comprises 390 residues: Galactokinase (390 aa).

A substrate-binding site is contributed by 33 to 36; that stretch reads EHTD. ATP contacts are provided by residues Ser-67 and 124–130; that span reads GAGLSSS. Residues Ser-130 and Glu-162 each coordinate Mg(2+). Residue Asp-174 is the Proton acceptor of the active site. Tyr-224 lines the substrate pocket.

It belongs to the GHMP kinase family. GalK subfamily.

It is found in the cytoplasm. The enzyme catalyses alpha-D-galactose + ATP = alpha-D-galactose 1-phosphate + ADP + H(+). It participates in carbohydrate metabolism; galactose metabolism. Catalyzes the transfer of the gamma-phosphate of ATP to D-galactose to form alpha-D-galactose-1-phosphate (Gal-1-P). This Bacillus subtilis (strain 168) protein is Galactokinase.